Consider the following 198-residue polypeptide: Cell division protein SepF (198 aa).

Residues 170–198 (EVPQPPARPARPASTNPPAWGNETNRMAQ) form a disordered region. Low complexity predominate over residues 179–188 (ARPASTNPPA).

Belongs to the SepF family. In terms of assembly, homodimer. Interacts with FtsZ.

It is found in the cytoplasm. In terms of biological role, cell division protein that is part of the divisome complex and is recruited early to the Z-ring. Probably stimulates Z-ring formation, perhaps through the cross-linking of FtsZ protofilaments. Its function overlaps with FtsA. The chain is Cell division protein SepF from Nostoc sp. (strain PCC 7120 / SAG 25.82 / UTEX 2576).